Consider the following 323-residue polypeptide: MGYYLVTGVAGFIGWRVGEFLLKEGKAVLGVDNLNDAYDVTLKYWRLNELKKSENFKFYQIDITNFQALKTIFETYSISAVIHLAARAGVRASLENPWVYVDSNITGTLNLLELMKDFGVKKLVLASTSSIYAGQSPPFHEDLKVDTPLSPYAATKKGAELLSYTYHHLYGLDISVVRYFTVYGPAGRPDMSIFRFIKWIYEEKPIKIFGDGTQARDFTYIDDIARGTIASLKPLGYEIINLGGGKNPISINQIIEILERLIGKKAKREYLNFHKADVKVTWADISKAKKLLNWEPEISIEEGLKRTVNWSKENIELIKSIKV.

Residue 11-13 participates in NAD(+) binding; it reads GFI. Catalysis depends on Tyr152, which acts as the Proton acceptor. NAD(+) is bound at residue Lys156.

Belongs to the NAD(P)-dependent epimerase/dehydratase family. The cofactor is NAD(+).

The enzyme catalyses UDP-alpha-D-glucuronate = UDP-alpha-D-galacturonate. Functionally, catalyzes the interconversion of UDP-D-glucuronic acid (UDP-GlcA) and UDP-D-galacturonic acid (UDP-GalA). This Thermodesulfobacterium geofontis (strain OPF15) protein is UDP-glucuronate 4-epimerase.